Consider the following 121-residue polypeptide: Basic phospholipase A2 homolog piratoxin-1 (121 aa).

7 disulfide bridges follow: Cys26/Cys115, Cys28/Cys44, Cys43/Cys95, Cys49/Cys121, Cys50/Cys88, Cys57/Cys81, and Cys75/Cys86. An important for membrane-damaging activities in eukaryotes and bacteria; heparin-binding region spans residues 105–117; it reads KLYRYHLKPFCKK.

It belongs to the phospholipase A2 family. Group II subfamily. K49 sub-subfamily. As to quaternary structure, homodimer; non-covalently linked. Expressed by the venom gland.

The protein localises to the secreted. With respect to regulation, rosmarinic acid inhibits the myotoxic activity. Bromophenacyl bromide (BPB) inhibits the myotoxic activity through a covalent binding. Caffeic acid and aristolochic acid, two plant compounds used in folk medicine used to treat envenomation, inhibit the myotoxic activity. Its function is as follows. Snake venom phospholipase A2 (PLA2) homolog that lacks enzymatic activity. Is myotoxic and displays edema-inducing activities. Induces neuromuscular blockage. A model of myotoxic mechanism has been proposed: an apo Lys49-PLA2 is activated by the entrance of a hydrophobic molecule (e.g. fatty acid) at the hydrophobic channel of the protein leading to a reorientation of a monomer. This reorientation causes a transition between 'inactive' to 'active' states, causing alignment of C-terminal and membrane-docking sites (MDoS) side-by-side and putting the membrane-disruption sites (MDiS) in the same plane, exposed to solvent and in a symmetric position for both monomers. The MDoS region stabilizes the toxin on membrane by the interaction of charged residues with phospholipid head groups. Subsequently, the MDiS region destabilizes the membrane with penetration of hydrophobic residues. This insertion causes a disorganization of the membrane, allowing an uncontrolled influx of ions (i.e. calcium and sodium), and eventually triggering irreversible intracellular alterations and cell death. The sequence is that of Basic phospholipase A2 homolog piratoxin-1 from Bothrops pirajai (Piraja's lancehead).